A 498-amino-acid polypeptide reads, in one-letter code: Galactose-1-phosphate uridylyltransferase (498 aa).

It belongs to the galactose-1-phosphate uridylyltransferase type 2 family.

Its subcellular location is the cytoplasm. The catalysed reaction is alpha-D-galactose 1-phosphate + UDP-alpha-D-glucose = alpha-D-glucose 1-phosphate + UDP-alpha-D-galactose. It participates in carbohydrate metabolism; galactose metabolism. This Clostridium perfringens (strain SM101 / Type A) protein is Galactose-1-phosphate uridylyltransferase.